The sequence spans 565 residues: MRPRSALPRLLLPLLLLPAAGPAQFHGEKGISIPDHGFCQPISIPLCTDIAYNQTIMPNLLGHTNQEDAGLEVHQFYPLVKVQCSPELRFFLCSMYAPVCTVLEQAIPPCRSICERARQGCEALMNKFGFQWPERLRCEHFPRHGAEQICVGQNHSEDGAPALLTTAPPPGLQPGAGGTPGGPGGGGAPPRYATLEHPFHCPRVLKVPSYLSYKFLGERDCAAPCEPARPDGSMFFSQEETRFARLWILTWSVLCCASTFFTVTTYLVDMQRFRYPERPIIFLSGCYTMVSVAYIAGFVLQERVVCNERFSEDGYRTVVQGTKKEGCTILFMMLYFFSMASSIWWVILSLTWFLAAGMKWGHEAIEANSQYFHLAAWAVPAVKTITILAMGQIDGDLLSGVCFVGLNSLDPLRGFVLAPLFVYLFIGTSFLLAGFVSLFRIRTIMKHDGTKTEKLERLMVRIGVFSVLYTVPATIVIACYFYEQAFREHWERSWVSQHCKSLAIPCPAHYTPRMSPDFTVYMIKYLMTLIVGITSGFWIWSGKTLHSWRKFYTRLTNSRHGETTV.

Residues methionine 1–alanine 23 form the signal peptide. The Extracellular portion of the chain corresponds to glutamine 24 to tryptophan 247. An FZ domain is found at proline 34–glutamine 153. Cystine bridges form between cysteine 39/cysteine 100, cysteine 47/cysteine 93, cysteine 84/cysteine 121, cysteine 110/cysteine 150, and cysteine 114/cysteine 138. A glycan (N-linked (GlcNAc...) asparagine) is linked at asparagine 53. A glycan (N-linked (GlcNAc...) asparagine) is linked at asparagine 154. The interval alanine 160–proline 189 is disordered. Residues proline 174 to alanine 188 show a composition bias toward gly residues. A helical transmembrane segment spans residues isoleucine 248–valine 268. Residues aspartate 269 to proline 279 are Cytoplasmic-facing. Residues isoleucine 280–leucine 300 traverse the membrane as a helical segment. Topologically, residues glutamine 301–cysteine 327 are extracellular. The helical transmembrane segment at threonine 328–leucine 348 threads the bilayer. The Cytoplasmic portion of the chain corresponds to serine 349–glutamine 370. Residues tyrosine 371–glycine 391 form a helical membrane-spanning segment. Topologically, residues glutamine 392–glycine 414 are extracellular. A helical membrane pass occupies residues phenylalanine 415–phenylalanine 435. The Cytoplasmic segment spans residues valine 436–arginine 461. Residues isoleucine 462 to tyrosine 482 traverse the membrane as a helical segment. At glutamate 483 to threonine 519 the chain is on the extracellular side. A helical membrane pass occupies residues valine 520 to tryptophan 540. Over serine 541 to valine 565 the chain is Cytoplasmic. The short motif at lysine 543 to tryptophan 548 is the Lys-Thr-X-X-X-Trp motif, mediates interaction with the PDZ domain of Dvl family members element. The short motif at threonine 563–valine 565 is the PDZ-binding element.

Belongs to the G-protein coupled receptor Fz/Smo family. In terms of assembly, (Microbial infection) Interacts with C.difficile toxin TcdB; frizzled receptors constitute the major host receptors for TcdB in the colonic epithelium. Post-translationally, ubiquitinated by ZNRF3, leading to its degradation by the proteasome. Widely expressed. In the adult, mainly found in heart, placenta, skeletal muscle, lung, kidney, pancreas, prostate, testis, ovary and colon. In the fetus, expressed in brain, lung and kidney. Low levels in fetal liver.

Its subcellular location is the membrane. The protein localises to the cell membrane. In terms of biological role, receptor for Wnt proteins. Most of frizzled receptors are coupled to the beta-catenin canonical signaling pathway, which leads to the activation of disheveled proteins, inhibition of GSK-3 kinase, nuclear accumulation of beta-catenin and activation of Wnt target genes. A second signaling pathway involving PKC and calcium fluxes has been seen for some family members, but it is not yet clear if it represents a distinct pathway or if it can be integrated in the canonical pathway, as PKC seems to be required for Wnt-mediated inactivation of GSK-3 kinase. Both pathways seem to involve interactions with G-proteins. May be involved in transduction and intercellular transmission of polarity information during tissue morphogenesis and/or in differentiated tissues. Functionally, (Microbial infection) Acts as a receptor for C.difficile toxin TcdB in the colonic epithelium. TcdB occupies the binding site for Wnt-adducted palmitoleate in frizzled receptors and TcdB-binding prevents Wnt-binding and downstream Wnt signaling. This chain is Frizzled-2 (FZD2), found in Homo sapiens (Human).